Here is an 805-residue protein sequence, read N- to C-terminus: Mitochondrial intermediate peptidase (805 aa).

The transit peptide at 1–25 (MIQPLVKASRPRLWVCSDCLLRRTL) directs the protein to the mitochondrion. Zn(2+) is bound at residue His578. Residue Glu579 is part of the active site. Residues His582 and His585 each coordinate Zn(2+).

Belongs to the peptidase M3 family. Zn(2+) serves as cofactor.

The protein resides in the mitochondrion matrix. It catalyses the reaction Release of an N-terminal octapeptide as second stage of processing of some proteins imported into the mitochondrion.. Functionally, cleaves proteins, imported into the mitochondrion, to their mature size. While most mitochondrial precursor proteins are processed to the mature form in one step by mitochondrial processing peptidase (MPP), the sequential cleavage by MIP of an octapeptide after initial processing by MPP is a required step for a subgroup of nuclear-encoded precursor proteins destined for the matrix or the inner membrane. The polypeptide is Mitochondrial intermediate peptidase (oct-1) (Neurospora crassa (strain ATCC 24698 / 74-OR23-1A / CBS 708.71 / DSM 1257 / FGSC 987)).